We begin with the raw amino-acid sequence, 111 residues long: X antigen family member 2 (111 aa).

Disordered stretches follow at residues M1 to I61 and K77 to V111. A compositionally biased stretch (basic and acidic residues) spans T86 to V111.

This sequence belongs to the GAGE family.

The protein is X antigen family member 2 (XAGE2) of Homo sapiens (Human).